A 424-amino-acid polypeptide reads, in one-letter code: UPF0415 protein C7orf25 homolog (424 aa).

The protein belongs to the UPF0415 family.

The sequence is that of UPF0415 protein C7orf25 homolog from Xenopus laevis (African clawed frog).